Here is a 384-residue protein sequence, read N- to C-terminus: Trophoblast glycoprotein-like (384 aa).

Residues 1 to 30 form the signal peptide; that stretch reads MAPRAGQRGLWSPLPGLLLLAAALSRPAAP. 2 cysteine pairs are disulfide-bonded: Cys31–Cys37 and Cys35–Cys47. At 31–309 the chain is on the extracellular side; sequence CPFQCYCFGS…DVAGPELEAS (279 aa). LRR repeat units lie at residues 61–84, 95–118, 119–142, 173–196, and 198–219; these read PPDA…AFAG, LPLL…AFDG, LPSL…AFRG, LAEL…ALRL, and RLEQ…ELSA. Asn66 carries N-linked (GlcNAc...) asparagine glycosylation. 2 cysteine pairs are disulfide-bonded: Cys240–Cys266 and Cys242–Cys287. The helical transmembrane segment at 310-330 threads the bilayer; the sequence is YVFFGLVLALIGLIFLMVLYL. Over 331–384 the chain is Cytoplasmic; it reads NRRGIQRWMHNLREACRDQMEGYHYRYEQDADPRRAPAPAAPAGSRATSPGSGL. The disordered stretch occupies residues 361–384; the sequence is ADPRRAPAPAAPAGSRATSPGSGL. A compositionally biased stretch (low complexity) spans 367–384; that stretch reads PAPAAPAGSRATSPGSGL.

The protein resides in the membrane. In Mus musculus (Mouse), this protein is Trophoblast glycoprotein-like (Tpbgl).